The following is an 805-amino-acid chain: N-(5-amino-5-carboxypentanoyl)-L-cysteinyl-D-valine synthase (805 aa).

Residues 783–805 are disordered; the sequence is PDTGGGAVGSTTTGGVRGELREI.

It belongs to the ATP-dependent AMP-binding enzyme family. Pantetheine 4'-phosphate is required as a cofactor.

It catalyses the reaction L-2-aminoadipate + L-valine + L-cysteine + 3 ATP + H2O = N-[(5S)-5-amino-5-carboxypentanoyl]-L-cysteinyl-D-valine + 3 AMP + 3 diphosphate + 3 H(+). It participates in antibiotic biosynthesis; penicillin G biosynthesis; penicillin G from L-alpha-aminoadipate and L-cysteine and L-valine: step 1/3. Functionally, each of the constituent amino acids of ACV are activated as aminoacyl-adenylates with peptide bonds formed through the participation of amino acid thioester intermediates. The polypeptide is N-(5-amino-5-carboxypentanoyl)-L-cysteinyl-D-valine synthase (pcbAB) (Streptomyces clavuligerus).